Consider the following 211-residue polypeptide: Probable nicotinate-nucleotide adenylyltransferase (211 aa).

The protein belongs to the NadD family.

It carries out the reaction nicotinate beta-D-ribonucleotide + ATP + H(+) = deamido-NAD(+) + diphosphate. The protein operates within cofactor biosynthesis; NAD(+) biosynthesis; deamido-NAD(+) from nicotinate D-ribonucleotide: step 1/1. In terms of biological role, catalyzes the reversible adenylation of nicotinate mononucleotide (NaMN) to nicotinic acid adenine dinucleotide (NaAD). The protein is Probable nicotinate-nucleotide adenylyltransferase of Shewanella frigidimarina (strain NCIMB 400).